A 159-amino-acid chain; its full sequence is 3-hydroxyacyl-[acyl-carrier-protein] dehydratase FabZ (159 aa).

Histidine 58 is an active-site residue.

Belongs to the thioester dehydratase family. FabZ subfamily.

The protein resides in the cytoplasm. The catalysed reaction is a (3R)-hydroxyacyl-[ACP] = a (2E)-enoyl-[ACP] + H2O. In terms of biological role, involved in unsaturated fatty acids biosynthesis. Catalyzes the dehydration of short chain beta-hydroxyacyl-ACPs and long chain saturated and unsaturated beta-hydroxyacyl-ACPs. This is 3-hydroxyacyl-[acyl-carrier-protein] dehydratase FabZ from Helicobacter pylori (strain ATCC 700392 / 26695) (Campylobacter pylori).